The primary structure comprises 568 residues: Urease subunit alpha (568 aa).

In terms of domain architecture, Urease spans 129–568 (GAIDSHIHFI…LPMAQRYFLF (440 aa)). Ni(2+)-binding residues include His-134, His-136, and Lys-217. An N6-carboxylysine modification is found at Lys-217. Position 219 (His-219) interacts with substrate. Ni(2+) is bound by residues His-246 and His-272. Residue His-320 is the Proton donor of the active site. Asp-360 contacts Ni(2+).

This sequence belongs to the metallo-dependent hydrolases superfamily. Urease alpha subunit family. Heterotrimer of UreA (gamma), UreB (beta) and UreC (alpha) subunits. Three heterotrimers associate to form the active enzyme. Ni cation is required as a cofactor. Carboxylation allows a single lysine to coordinate two nickel ions.

It is found in the cytoplasm. It carries out the reaction urea + 2 H2O + H(+) = hydrogencarbonate + 2 NH4(+). The protein operates within nitrogen metabolism; urea degradation; CO(2) and NH(3) from urea (urease route): step 1/1. The chain is Urease subunit alpha from Saccharophagus degradans (strain 2-40 / ATCC 43961 / DSM 17024).